The primary structure comprises 458 residues: Argininosuccinate lyase (458 aa).

It belongs to the lyase 1 family. Argininosuccinate lyase subfamily.

The protein resides in the cytoplasm. The catalysed reaction is 2-(N(omega)-L-arginino)succinate = fumarate + L-arginine. It functions in the pathway amino-acid biosynthesis; L-arginine biosynthesis; L-arginine from L-ornithine and carbamoyl phosphate: step 3/3. This chain is Argininosuccinate lyase, found in Actinobacillus pleuropneumoniae serotype 5b (strain L20).